Here is a 989-residue protein sequence, read N- to C-terminus: MSMNVTNPNIAKTSMRGLTNFISDLRNSPSKENEEKRVTKEMAHIRKEFKENKNIDGYQRRKYVCKLVYMYMLGYELDFGHMEAVTLLSSTKFSEKQIGYIALGILLNEQHEMLPLIINSFKEDLLARSDYFQSLALAAICNIGGKEVAEFLSPLIQKLLIANTSSPMVKKRCALAILRMNRKHIGLVTPDSWVERLVSVLDEPDFGVLTSLMSLLIELASENPIGWEPAIPKVIHLLKKIIINKEFPKEYVYYHVTCPWLQVKLLKFLRYFPAPDDSQGGKVLGEILTAVFAQSESAKAGTVNHKNSLNAVLFEAINLIIHLDNDPVLLKQTSLLLGRFITVKETNIRYLGLEAMSHFASLSNETSIMIKKYQDTVLLSLKDSDISIRRRALDLLYGMCDKNTCKHIVAELLSYLQTADYAIREELVIKIANLAEKFASNYSWYVDVILQLITTAGDFVSDDIWFRVVKIVTNHEDIQAYAASTVFNALQSRNCHETLIKVGGYILGEFGHLIADNPQSSPLVQFNILHSKFNTCGAPTKALLLSTYAKFVNLFPELTQQTQEVFKQHQSYIDAEIQQRACEYLNLTSLNEDLMQTVLDVIPAFIDAKDNSNTTSNTANNSNMINSQDSKISSGGFNQSPQPSQQQQQQQPPQQQQAQLQQNVSSNGLDLLDPFGLGLGNQQQQQQQPVQQAQPVYQQQQQAESFSPVQSDTVSSFGQQQQQQQGGFSSPTIQASSSPISSGGSDPMQIKILASYKRLCLVSEGVLYEDSMLQVGLKSEYQSGQGRLMLYYGNSSAFPLTNFNVTLNSIAGLTLQPQSIAPVIQPKAQLQQPVTFSCTSEFTESPVITINFLTPGKPITITLRLPIVISKFFEPLRLSSGDFFARWKTISGKPLEIQEIFKSTKPIDIQSYNRVIQEGLNITVLKQVDPNPNNIVASCLFPFGSNGQPINSYIRIETNPQANMCRLTIRSQSATLTNTIKNLLISHLQ.

HEAT repeat units lie at residues 112–149 (EMLP…KEVA), 188–225 (VTPD…ENPI), 368–402 (IMIK…MCDK), and 403–440 (NTCK…KFAS). Residues 610–745 (DNSNTTSNTA…SSSPISSGGS (136 aa)) form a disordered region. Positions 611 to 623 (NSNTTSNTANNSN) are enriched in low complexity. Over residues 624–638 (MINSQDSKISSGGFN) the composition is skewed to polar residues. Positions 639 to 703 (QSPQPSQQQQ…QPVYQQQQQA (65 aa)) are enriched in low complexity. Polar residues predominate over residues 704–714 (ESFSPVQSDTV). Residues 715–745 (SSFGQQQQQQQGGFSSPTIQASSSPISSGGS) are compositionally biased toward low complexity.

Belongs to the adaptor complexes large subunit family. Adaptor protein complex 2 (AP-2) is a heterotetramer composed of two large adaptins (alpha-type and beta-type subunits), a medium adaptin (mu-type subunit AP50) and a small adaptin (sigma-type subunit AP17).

Its subcellular location is the cell membrane. It is found in the membrane. It localises to the coated pit. Functionally, component of the adaptor complexes which link clathrin to receptors in coated vesicles. Clathrin-associated protein complexes are believed to interact with the cytoplasmic tails of membrane proteins, leading to their selection and concentration. This is AP-2 complex subunit alpha-2 (ap2a1-1) from Dictyostelium discoideum (Social amoeba).